A 521-amino-acid chain; its full sequence is MHMQFQLPGRRRRHRTTWIEWVLVHKSARSGGELKAVMEDSDRKRHCWQCRRSCVVCDFTQPGCQRCSAAGVSCPGYSDIEPRKLKWLAPGKVLSRNHKANKAHLVRKSTTIATASAQAVEPKISDWNMRYNACILEDLTPIHELGRHPYIHHVSPERLKEAILVPEFLRSGLICMTLNHRMNRLGIRSNPGATDLVEKYYIHWGITIRSLSEQFNVENKRTSDVVIAGILTILLGDIQNGAQVSWLHHLDGIHKLVSLRGGFRALAPSQRLAPLLNCLWFIGIITNTTCPASYLNLSTISHFEASDFMQEHYSFASTPTQMFPPQLLAEVSKINYLRLQAKSKKEYRDEHLSKDAYNILESIEAFSPEESAQSKFSSKEDWMRIGTVYRSATALYCILSLQSVSVLPEDSALRTRCVIHGQVLLRHLPESLSSARTKRFMLWPLVLLGVEAVHSDMATRAFVSKQLPELSRSVGTSIPLTAQSVLESFWASGLKLWDACFDRPYPFTMQIAVDVSQVSTP.

The zn(2)-C6 fungal-type DNA-binding region spans 46–76 (HCWQCRRSCVVCDFTQPGCQRCSAAGVSCPG).

The protein localises to the nucleus. Functionally, transcriptional regulator; part of the gene cluster that mediates the biosynthesis of phomenoic acid, a long chain aliphatic carboxylic acid that does not appear to be essential for pathogenicity but may play a role in allowing to outcompete other fungi in the environmental niche via its antifungal properties. Positively regulates the expression of the cluster and subsequent production of phomenoic acid. The sequence is that of Phomenoic acid biosynthesis cluster-specific transcriptional regulator from Leptosphaeria maculans (strain JN3 / isolate v23.1.3 / race Av1-4-5-6-7-8) (Blackleg fungus).